A 490-amino-acid polypeptide reads, in one-letter code: Histone-lysine N-methyltransferase, H3 lysine-9 specific (490 aa).

A Chromo domain is found at 8–69 (YEVERIVDEK…RKRRLKGSNS (62 aa)). Disordered regions lie at residues 61-133 (KRRL…TALT) and 150-190 (KKLG…KPRN). The span at 102 to 114 (FSRELNVKKENKK) shows a compositional bias: basic and acidic residues. Residues 115 to 133 (VFSSQTTKRQSRKQSTALT) show a composition bias toward polar residues. The residue at position 127 (Lys-127) is an N6,N6,N6-trimethyllysine; alternate. Lys-127 is subject to N6-methyllysine; alternate. The segment covering 155–168 (TRNEVKEESQKREL) has biased composition (basic and acidic residues). Over residues 169 to 185 (VSNSIKEATSPKTSSIL) the composition is skewed to polar residues. In terms of domain architecture, Pre-SET spans 258–325 (SGCNCSSLGG…ECPNRVVQRG (68 aa)). Zn(2+)-binding residues include Cys-260, Cys-262, Cys-268, Cys-276, Cys-278, Cys-307, Cys-311, Cys-313, and Cys-317. The region spanning 328 to 452 (LPLEIFKTKE…PLEELTFDYA (125 aa)) is the SET domain. Residues 338–340 (KGW), Tyr-381, Arg-406, and 407–410 (FFNH) contribute to the S-adenosyl-L-methionine site. Cys-412 is a Zn(2+) binding site. An autoregulatory loop region spans residues 453–472 (GAKDFSPVQSQKSQQNRISK). N6,N6,N6-trimethyllysine; by autocatalysis; alternate is present on Lys-455. Lys-455 carries the post-translational modification N6,N6-dimethyllysine; by autocatalysis; alternate. N6-methyllysine; by autocatalysis; alternate is present on Lys-455. Residue Lys-464 is modified to N6-methyllysine. The Post-SET domain occupies 473–489 (LRRQCKCGSANCRGWLF). Zn(2+) is bound by residues Cys-477, Cys-479, and Cys-484. 477–478 (CK) is an S-adenosyl-L-methionine binding site.

The protein belongs to the class V-like SAM-binding methyltransferase superfamily. Histone-lysine methyltransferase family. Suvar3-9 subfamily. In terms of assembly, component of the Clr4 methyltransferase complex (ClrC) composed of at least clr4, rik1, pcu4, rbx1, raf1 and raf2. The cullin pcu4, rik1, raf1, raf2 and the ring-box protein rbx1 are components of an E3 ubiquitin ligase, whose activity is essential for heterochromatin assembly. Interacts directly with pcu4. Interacts with mlo3. In terms of processing, autocatalytic methylation of specific lysine residues in an internal loop (autoregulatory loop) promote a conformational switch that enhances the H3K9me activity of clr4.

The protein localises to the nucleus. Its subcellular location is the cytoplasm. It is found in the cytoskeleton. The protein resides in the microtubule organizing center. It localises to the spindle pole body. The protein localises to the chromosome. It catalyses the reaction L-lysyl(9)-[histone H3] + 3 S-adenosyl-L-methionine = N(6),N(6),N(6)-trimethyl-L-lysyl(9)-[histone H3] + 3 S-adenosyl-L-homocysteine + 3 H(+). The enzyme catalyses N(6)-methyl-L-lysyl(9)-[histone H3] + S-adenosyl-L-methionine = N(6),N(6)-dimethyl-L-lysyl(9)-[histone H3] + S-adenosyl-L-homocysteine + H(+). The catalysed reaction is N(6),N(6)-dimethyl-L-lysyl(9)-[histone H3] + S-adenosyl-L-methionine = N(6),N(6),N(6)-trimethyl-L-lysyl(9)-[histone H3] + S-adenosyl-L-homocysteine + H(+). It carries out the reaction L-lysyl-[protein] + S-adenosyl-L-methionine = N(6)-methyl-L-lysyl-[protein] + S-adenosyl-L-homocysteine + H(+). It catalyses the reaction N(6)-methyl-L-lysyl-[protein] + S-adenosyl-L-methionine = N(6),N(6)-dimethyl-L-lysyl-[protein] + S-adenosyl-L-homocysteine + H(+). The enzyme catalyses N(6),N(6)-dimethyl-L-lysyl-[protein] + S-adenosyl-L-methionine = N(6),N(6),N(6)-trimethyl-L-lysyl-[protein] + S-adenosyl-L-homocysteine + H(+). The catalysed reaction is L-lysyl(9)-[histone H3] + S-adenosyl-L-methionine = N(6)-methyl-L-lysyl(9)-[histone H3] + S-adenosyl-L-homocysteine + H(+). Its activity is regulated as follows. An internal loop (autoregulatory loop) inhibits the catalytic activity of the enzyme by blocking the histone H3K9 substrate-binding pocket. Autocatalytic methylation of specific lysine residues in this loop promote a conformational switch that enhances the H3K9me activity of clr4. Histone methyltransferase which contributes to the establishment of heterochromatin by specifically methylating histone H3 to form H3K9me. Part of the Clr4 methyltransferase complex (ClrC). ClrC preferentially ubiquitylates H3K14 and ClrC-mediated H3 ubiquitination promotes clr4 methyltransferase activity. Clr4 functions as a reader and writer of H3K9 methylation. It sets the H3K9me mark and afterwards this H3K9me mark is recognized by the chromodomains of clr4 and swi6/HP1, which then recruit additional clr4 leading to the methylation of neighboring nucleosomes. H3K9me represents a specific tag for epigenetic transcriptional repression by recruiting swi6/HP1 to methylated histones which leads to transcriptional silencing within centromeric heterochromatin, telomeres, ribosomal DNA repeats, and the silent mating-type region. Clr4 methyltransferase activity promotes the assembly of a tripartite complex composed of ClrC and complexes involved in siRNA generation. Apart from H3K9, also methylates non-histone proteins such as mlo3. Interacts with mlo3 to promote the processing of centromeric and antisense RNAs. The polypeptide is Histone-lysine N-methyltransferase, H3 lysine-9 specific (clr4) (Schizosaccharomyces pombe (strain 972 / ATCC 24843) (Fission yeast)).